The following is a 1304-amino-acid chain: DNA-directed RNA polymerase subunit beta' (1304 aa).

A disordered region spans residues 1–23 (MSEKGRFSAGLSRQAADGNKADA). Cys-241, Cys-315, Cys-322, and Cys-325 together coordinate Zn(2+). Acidic residues predominate over residues 1256–1268 (AAEPEPDEEEEEP). A disordered region spans residues 1256–1304 (AAEPEPDEEEEEPAVLPELPPRLILEDDQLIDDSTPAFDELEEDDDEEE). A compositionally biased stretch (low complexity) spans 1269-1278 (AVLPELPPRL). Residues 1294–1304 (DELEEDDDEEE) show a composition bias toward acidic residues.

It belongs to the RNA polymerase beta' chain family. RpoC2 subfamily. In cyanobacteria the RNAP catalytic core is composed of 2 alpha, 1 beta, 1 beta', 1 gamma and 1 omega subunit. When a sigma factor is associated with the core the holoenzyme is formed, which can initiate transcription. The cofactor is Zn(2+).

It carries out the reaction RNA(n) + a ribonucleoside 5'-triphosphate = RNA(n+1) + diphosphate. Functionally, DNA-dependent RNA polymerase catalyzes the transcription of DNA into RNA using the four ribonucleoside triphosphates as substrates. In Synechococcus sp. (strain JA-2-3B'a(2-13)) (Cyanobacteria bacterium Yellowstone B-Prime), this protein is DNA-directed RNA polymerase subunit beta'.